A 423-amino-acid chain; its full sequence is MDIDQYMTDLGRRARHASRAMARASTAAKNAALDAVARAIERDAQALKDANARDVARAREKGLDAAFIDRLTLSDKALNTMVEGLRQVASLADPIGEIGNLKFRPSGIQVGQMRVPLGVIGIIYESRPNVTIDAAALCLKSGNATILRGGSEALESNAALAKLIGEGLEAAGLPQDAVQVVATADRAAVGKLITMTEYVDVIVPRGGKSLIERLINEARVPMIKHLDGICHVYVDDRADLAKALTVCDNAKTHRYGTCNTMETLLVASGIAAKLLPPLGKLYRDKQVELRVDAAARAVLADAGVGPLVDVTEEDWHTEYLAPVLAIKVVDGLDAAIEHINHYGSHHTDAIVTEDHDRAMRFLREVDSASVMVNASTRFADGFEFGLGAEIGISNDKLHARGPVGLEGLTSLKYVVLGHGEGRQ.

This sequence belongs to the gamma-glutamyl phosphate reductase family.

It is found in the cytoplasm. It catalyses the reaction L-glutamate 5-semialdehyde + phosphate + NADP(+) = L-glutamyl 5-phosphate + NADPH + H(+). Its pathway is amino-acid biosynthesis; L-proline biosynthesis; L-glutamate 5-semialdehyde from L-glutamate: step 2/2. In terms of biological role, catalyzes the NADPH-dependent reduction of L-glutamate 5-phosphate into L-glutamate 5-semialdehyde and phosphate. The product spontaneously undergoes cyclization to form 1-pyrroline-5-carboxylate. This is Gamma-glutamyl phosphate reductase from Burkholderia orbicola (strain AU 1054).